Here is a 186-residue protein sequence, read N- to C-terminus: Potassium-transporting ATPase KdpC subunit (186 aa).

A helical membrane pass occupies residues 10–30 (LTIITMVLCGFLFPLAITLIG).

Belongs to the KdpC family. As to quaternary structure, the system is composed of three essential subunits: KdpA, KdpB and KdpC.

The protein resides in the cell membrane. Functionally, part of the high-affinity ATP-driven potassium transport (or Kdp) system, which catalyzes the hydrolysis of ATP coupled with the electrogenic transport of potassium into the cytoplasm. This subunit acts as a catalytic chaperone that increases the ATP-binding affinity of the ATP-hydrolyzing subunit KdpB by the formation of a transient KdpB/KdpC/ATP ternary complex. The polypeptide is Potassium-transporting ATPase KdpC subunit (Staphylococcus aureus (strain bovine RF122 / ET3-1)).